We begin with the raw amino-acid sequence, 169 residues long: Major pepsin inhibitor 3 (169 aa).

The first 20 residues, 1 to 20, serve as a signal peptide directing secretion; the sequence is MHVWLILSLASLWTSSIAYS. Position 21 is a pyrrolidone carboxylic acid (Gln-21). Cystine bridges form between Cys-33/Cys-79, Cys-68/Cys-86, and Cys-99/Cys-166. Residues 135–169 are disordered; sequence EEQQENQPPSSGMPHGAVPAGGLSPPPPPSFCTVQ. Residues 158–169 show a composition bias toward pro residues; the sequence is SPPPPPSFCTVQ.

This sequence belongs to the protease inhibitor I33 family. In terms of tissue distribution, body wall.

Its subcellular location is the secreted. Functionally, this is an inhibitor of the aspartic protease pepsin. The polypeptide is Major pepsin inhibitor 3 (Ascaris suum (Pig roundworm)).